We begin with the raw amino-acid sequence, 339 residues long: MSTVHEILCKLSLEGDHSTPPSAYGSVKAYTNFDAERDALNIETAIKTKGVDEVTIVNILTNRSNEQRQDIAFAYQRRTKKELASALKSALSGHLETVILGLLKTPAQYDASELKASMKGLGTDEDSLIEIICSRTNQELQEINRVYKEMYKTDLEKDIISDTSGDFRKLMVALAKGRRAEDGSVIDYELIDQDARDLYDAGVKRKGTDVPKWISIMTERSVCHLQKVFERYKSYSPYDMLESIKKEVKGDLENAFLNLVQCIQNKPLYFADRLYDSMKGKGTRDKVLIRIMVSRSEVDMLKIRSEFKRKYGKSLYYYIQQDTKGDYQKALLYLCGGDD.

At Ser2 the chain carries N-acetylserine. The interval 2–24 (STVHEILCKLSLEGDHSTPPSAY) is S100A10-binding site. A Phosphotyrosine; by SRC modification is found at Tyr24. Phosphoserine; by PKC is present on Ser26. 2 Annexin repeats span residues 33 to 104 (FDAE…GLLK) and 105 to 176 (TPAQ…ALAK). At Lys49 the chain carries N6-acetyllysine; alternate. A Glycyl lysine isopeptide (Lys-Gly) (interchain with G-Cter in SUMO1); alternate cross-link involves residue Lys49. Lys49 participates in a covalent cross-link: Glycyl lysine isopeptide (Lys-Gly) (interchain with G-Cter in SUMO2); alternate. Lys152 carries the post-translational modification N6-acetyllysine. Residue Ser184 is modified to Phosphoserine. Annexin repeat units follow at residues 189–261 (ELID…NLVQ) and 265–336 (NKPL…YLCG). At Tyr199 the chain carries Phosphotyrosine. At Lys227 the chain carries N6-acetyllysine.

Belongs to the annexin family. As to quaternary structure, heterotetramer containing 2 light chains of S100A10/p11 and 2 heavy chains of ANXA2/p36. Interacts with ATP1B1. Interacts with DYSF. Interacts with COCH. Interacts (via repeat Annexin 1) with PCSK9 (via the C-terminal domain); the interaction inhibits the degradation of LDLR. Interacts with CEACAM1 (via the cytoplasmic domain); this interaction is regulated by phosphorylation of CEACAM1. Interacts with APPL2 and APPL1; targets APPL2 to endosomes and acting in parallel to RAB5A. Interacts with S100A4. May interact with UBAP2. Interacts with PLEKHG4B; this interaction is required for PLEKHG4B localization to cell-cell adhesions. In terms of processing, ISGylated.

The protein resides in the secreted. The protein localises to the extracellular space. Its subcellular location is the extracellular matrix. It is found in the basement membrane. Functionally, calcium-regulated membrane-binding protein whose affinity for calcium is greatly enhanced by anionic phospholipids. It binds two calcium ions with high affinity. May be involved in heat-stress response. Inhibits PCSK9-enhanced LDLR degradation, probably reduces PCSK9 protein levels via a translational mechanism but also competes with LDLR for binding with PCSK9. Binds to endosomes damaged by phagocytosis of particulate wear debris and participates in endosomal membrane stabilization, thereby limiting NLRP3 inflammasome activation. Required for endothelial cell surface plasmin generation and may support fibrinolytic surveillance and neoangiogenesis. In Canis lupus familiaris (Dog), this protein is Annexin A2 (ANXA2).